The chain runs to 193 residues: Thymidine kinase (193 aa).

Residues 9–16 (SAMNAGKS) and 87–90 (DEAQ) each bind ATP. The active-site Proton acceptor is Glu88. Positions 145, 147, 182, and 185 each coordinate Zn(2+).

Belongs to the thymidine kinase family. As to quaternary structure, homotetramer.

It is found in the cytoplasm. It catalyses the reaction thymidine + ATP = dTMP + ADP + H(+). This chain is Thymidine kinase, found in Idiomarina loihiensis (strain ATCC BAA-735 / DSM 15497 / L2-TR).